The following is a 243-amino-acid chain: Phosphate-specific transport system accessory protein PhoU (243 aa).

The protein belongs to the PhoU family. Homodimer. Interacts with phosphate regulon transcriptional regulatory protein PhoB and ferric uptake regulation protein Fur.

The protein resides in the cytoplasm. Functionally, part of the phosphate (Pho) regulon, which plays a key role in phosphate homeostasis. Encoded together with proteins of the phosphate-specific transport (Pst) system in the polycistronic pstSCAB-phoU operon. PhoU is essential for the repression of the Pho regulon at high phosphate conditions. In this role, it may bind, possibly as a chaperone, to PhoR, PhoB or a PhoR-PhoB complex to promote dephosphorylation of phospho-PhoB, or inhibit formation of the PhoR-PhoB transitory complex. The chain is Phosphate-specific transport system accessory protein PhoU from Edwardsiella tarda.